A 647-amino-acid chain; its full sequence is MEDNTPRQRDPISLTSVANGLENMGAELLESLEEGRAPGSDSSPAEVGGGWSKAGPEHLGRRSLQPALRVRRFCREHTQLFRWICTGLLCTAFAAFLLIACLLDFQRALALFVLFCVVLFFLAHSLLKRLLGPKLLRCVKPLRHPCLNLWFKRGLALAAFLGLVLWLVLDTAQRPEQLVSFGGICVFILLLFAGSKHHRAVSWRAVSWGLGLQFALGLFVIRTEPGFIAFQWLGDQIQIFLSYTEAGSSFVFGEALVKDVFAFQVLPIIVFFSCAMSVLYYVGLMQWVILKISWLMQATMGTTATETLSVAGNIFVSQTEAPLLIRPYLADMTLSEIHVVMTGGYATIAGSLLGAYISFGIDAASLIAASVMAAPCALALSKLVYPEVEESKFKREEGVKLTYGDAQNLLEAASSGAAMSVRVVTNIAANLIAFLAVLAFINAALSWLGDMVDVQGLSFQLICSYVLRPVAFLMGVAWEDCPVVAELLGMKLFLNEFVAYQELSGYKQRRLAGAEEWVGSRKQWISVRAEILTTYALCGFANFSSIGIMLGGLTSMVPQRKGDFSQIVLRALCTGACVSLVNACVAGILYVPRGAEVDCVSFLNTTLSSSSFEVYQCCRQFFQSTSLEFSPEALDNCCRFYNHTICV.

Residues 1-79 (MEDNTPRQRD…VRRFCREHTQ (79 aa)) lie on the Cytoplasmic side of the membrane. Residues 34–58 (EGRAPGSDSSPAEVGGGWSKAGPEH) form a disordered region. Residues 80 to 103 (LFRWICTGLLCTAFAAFLLIACLL) traverse the membrane as a helical segment. The Extracellular portion of the chain corresponds to 104 to 108 (DFQRA). Residues 109–127 (LALFVLFCVVLFFLAHSLL) traverse the membrane as a helical segment. Residues 128-146 (KRLLGPKLLRCVKPLRHPC) are Cytoplasmic-facing. The chain crosses the membrane as a helical span at residues 147–166 (LNLWFKRGLALAAFLGLVLW). Residues 167–177 (LVLDTAQRPEQ) lie on the Extracellular side of the membrane. A helical transmembrane segment spans residues 178–194 (LVSFGGICVFILLLFAG). The Cytoplasmic portion of the chain corresponds to 195 to 200 (SKHHRA). A helical membrane pass occupies residues 201-221 (VSWRAVSWGLGLQFALGLFVI). Over 222–260 (RTEPGFIAFQWLGDQIQIFLSYTEAGSSFVFGEALVKDV) the chain is Extracellular. Residues 261–282 (FAFQVLPIIVFFSCAMSVLYYV) form a helical membrane-spanning segment. Over 283–293 (GLMQWVILKIS) the chain is Cytoplasmic. Residues 294–317 (WLMQATMGTTATETLSVAGNIFVS) form a helical membrane-spanning segment. Residues 318–336 (QTEAPLLIRPYLADMTLSE) are Extracellular-facing. A helical transmembrane segment spans residues 337-359 (IHVVMTGGYATIAGSLLGAYISF). Over 360 to 365 (GIDAAS) the chain is Cytoplasmic. Residues 366–385 (LIAASVMAAPCALALSKLVY) form a helical membrane-spanning segment. Over 386–422 (PEVEESKFKREEGVKLTYGDAQNLLEAASSGAAMSVR) the chain is Extracellular. The helical transmembrane segment at 423–445 (VVTNIAANLIAFLAVLAFINAAL) threads the bilayer. Residues 446–456 (SWLGDMVDVQG) are Cytoplasmic-facing. A helical transmembrane segment spans residues 457–478 (LSFQLICSYVLRPVAFLMGVAW). Over 479–533 (EDCPVVAELLGMKLFLNEFVAYQELSGYKQRRLAGAEEWVGSRKQWISVRAEILT) the chain is Extracellular. Residues 534-557 (TYALCGFANFSSIGIMLGGLTSMV) traverse the membrane as a helical segment. At 558–568 (PQRKGDFSQIV) the chain is on the cytoplasmic side. The chain crosses the membrane as a helical span at residues 569 to 591 (LRALCTGACVSLVNACVAGILYV). The Extracellular portion of the chain corresponds to 592–647 (PRGAEVDCVSFLNTTLSSSSFEVYQCCRQFFQSTSLEFSPEALDNCCRFYNHTICV). Asn-604 and Asn-642 each carry an N-linked (GlcNAc...) asparagine glycan.

Belongs to the concentrative nucleoside transporter (CNT) (TC 2.A.41) family. In terms of processing, N-glycosylated. N-glycosylation is required for localization to the plasma membrane and the transporter activity.

Its subcellular location is the cell membrane. The protein resides in the apical cell membrane. The catalysed reaction is uridine(out) + Na(+)(out) = uridine(in) + Na(+)(in). It catalyses the reaction thymidine(out) + Na(+)(out) = thymidine(in) + Na(+)(in). The enzyme catalyses cytidine(out) + Na(+)(out) = cytidine(in) + Na(+)(in). It carries out the reaction adenosine(out) + Na(+)(out) = adenosine(in) + Na(+)(in). Due to its high apparent affinity but slow transport, adenosine could act as a negative regulator of pyrimidine transport under some conditions. Sodium and pyrimidine nucleoside symporter of the plasma membrane that imports uridine, thymidine and cytidine into cells by coupling their transport to the transmembrane sodium electrochemical gradient. Also transports adenosine, an atypical substrate transported with high apparent affinity, but low maximum velocity. Therefore, exhibits the transport characteristics of the nucleoside transport system cit or N2 subtype (N2/cit). Involved in renal nucleoside (re)absorption. This chain is Sodium/nucleoside cotransporter 1 (SLC28A1), found in Sus scrofa (Pig).